A 549-amino-acid polypeptide reads, in one-letter code: Calcium-dependent protein kinase 5 (549 aa).

Glycine 2 is lipidated: N-myristoyl glycine. The interval 43–69 (DEPAGKKAPRGSAAAADAPHAASMKRG) is disordered. The span at 52 to 64 (RGSAAAADAPHAA) shows a compositional bias: low complexity. One can recognise a Protein kinase domain in the interval 92-350 (YALGRKLGQG…AHEVLCHPWI (259 aa)). ATP-binding positions include 98–106 (LGQGQFGTT) and lysine 121. Aspartate 216 acts as the Proton acceptor in catalysis. Positions 356–386 (APDRPLDPAVLSRIKQFSAMNKLKKMALRVI) are autoinhibitory domain. EF-hand domains are found at residues 393–428 (EEIA…YGST), 429–464 (LKDT…LNKL), 465–500 (EREE…HNMP), and 501–534 (DAFL…GNMG). Ca(2+)-binding residues include aspartate 406, aspartate 408, serine 410, glutamate 417, aspartate 442, aspartate 444, serine 446, threonine 448, glutamate 453, aspartate 478, aspartate 480, serine 482, tyrosine 484, glutamate 489, aspartate 512, aspartate 514, aspartate 516, arginine 518, and glutamate 523.

The protein belongs to the protein kinase superfamily. Ser/Thr protein kinase family. CDPK subfamily.

The protein resides in the membrane. It catalyses the reaction L-seryl-[protein] + ATP = O-phospho-L-seryl-[protein] + ADP + H(+). The catalysed reaction is L-threonyl-[protein] + ATP = O-phospho-L-threonyl-[protein] + ADP + H(+). With respect to regulation, activated by calcium. Autophosphorylation may play an important role in the regulation of the kinase activity. May play a role in signal transduction pathways that involve calcium as a second messenger. The protein is Calcium-dependent protein kinase 5 of Oryza sativa subsp. japonica (Rice).